A 278-amino-acid chain; its full sequence is 2-succinyl-6-hydroxy-2,4-cyclohexadiene-1-carboxylate synthase (278 aa).

It belongs to the AB hydrolase superfamily. MenH family. As to quaternary structure, monomer.

It catalyses the reaction 5-enolpyruvoyl-6-hydroxy-2-succinyl-cyclohex-3-ene-1-carboxylate = (1R,6R)-6-hydroxy-2-succinyl-cyclohexa-2,4-diene-1-carboxylate + pyruvate. The protein operates within quinol/quinone metabolism; 1,4-dihydroxy-2-naphthoate biosynthesis; 1,4-dihydroxy-2-naphthoate from chorismate: step 3/7. Its pathway is quinol/quinone metabolism; menaquinone biosynthesis. Its function is as follows. Catalyzes a proton abstraction reaction that results in 2,5-elimination of pyruvate from 2-succinyl-5-enolpyruvyl-6-hydroxy-3-cyclohexene-1-carboxylate (SEPHCHC) and the formation of 2-succinyl-6-hydroxy-2,4-cyclohexadiene-1-carboxylate (SHCHC). The chain is 2-succinyl-6-hydroxy-2,4-cyclohexadiene-1-carboxylate synthase from Photorhabdus laumondii subsp. laumondii (strain DSM 15139 / CIP 105565 / TT01) (Photorhabdus luminescens subsp. laumondii).